Here is a 112-residue protein sequence, read N- to C-terminus: DNA-binding protein Bv3F (112 aa).

Positions 65–92 (KRNSKRMSTVPKYRDPATGKTWSGRGRQ) are disordered. DNA-binding regions lie at residues 89–94 (RGRQPA) and 89–95 (RGRQPAW).

This sequence belongs to the histone-like protein H-NS family. As to quaternary structure, homodimer that oligomerizes on DNA into higher-order complexes that form bridges between disparate regions of DNA compacting it.

It localises to the cytoplasm. The protein localises to the nucleoid. Functionally, a DNA-binding protein implicated in transcriptional repression and chromosome organization and compaction. Binds in the minor groove of AT-rich DNA. Binds nucleation sites in AT-rich DNA and bridges them, forming higher-order nucleoprotein complexes and condensing the chromosome. As many horizontally transferred genes are AT-rich, it plays a central role in silencing foreign genes. This is DNA-binding protein Bv3F from Burkholderia vietnamiensis (strain G4 / LMG 22486) (Burkholderia cepacia (strain R1808)).